The following is a 115-amino-acid chain: Large ribosomal subunit protein bL19 (115 aa).

This sequence belongs to the bacterial ribosomal protein bL19 family.

This protein is located at the 30S-50S ribosomal subunit interface and may play a role in the structure and function of the aminoacyl-tRNA binding site. In Aeromonas hydrophila subsp. hydrophila (strain ATCC 7966 / DSM 30187 / BCRC 13018 / CCUG 14551 / JCM 1027 / KCTC 2358 / NCIMB 9240 / NCTC 8049), this protein is Large ribosomal subunit protein bL19.